Reading from the N-terminus, the 120-residue chain is Dihydroneopterin aldolase (120 aa).

Glu-20 and Met-114 together coordinate substrate.

Belongs to the archaeal dihydroneopterin aldolase family. As to quaternary structure, homotetramer.

The catalysed reaction is 7,8-dihydroneopterin = 6-hydroxymethyl-7,8-dihydropterin + glycolaldehyde. In terms of biological role, catalyzes the conversion of 7,8-dihydroneopterin (H2Neo) to 6-hydroxymethyl-7,8-dihydropterin (6-HMD). This is Dihydroneopterin aldolase from Picrophilus torridus (strain ATCC 700027 / DSM 9790 / JCM 10055 / NBRC 100828 / KAW 2/3).